The following is a 342-amino-acid chain: AA9 family lytic polysaccharide monooxygenase AA9-X282 (342 aa).

The N-terminal stretch at 1-18 is a signal peptide; sequence MKSFASLLFLAATAAAHA. Histidine 17 is a Cu(2+) binding site. Phosphothreonine is present on residues threonine 19 and threonine 57. A Phosphoserine modification is found at serine 59. A disulfide bond links cysteine 63 and cysteine 181. Residue histidine 93 participates in Cu(2+) binding. O2 contacts are provided by histidine 167 and glutamine 176. Tyrosine 178 is a binding site for Cu(2+). A glycan (N-linked (GlcNAc...) asparagine) is linked at asparagine 189. Positions 233–263 are X282 extension; it reads SPATVANTPYPTTATWNTALQPTTVPTVTPP. Residues 281–302 form a disordered region; it reads VTSQPPVPPTTQQPPVVTPTAP. The segment covering 285 to 302 has biased composition (pro residues); it reads PPVPPTTQQPPVVTPTAP. In terms of domain architecture, CBM1 spans 306–342; that stretch reads PLQTQYGQCGGQGWNGPTQCQPPYTCTASNQWYHQCL.

It belongs to the polysaccharide monooxygenase AA9 family. Cu(2+) serves as cofactor.

It is found in the secreted. It catalyses the reaction [(1-&gt;4)-beta-D-glucosyl]n+m + reduced acceptor + O2 = 4-dehydro-beta-D-glucosyl-[(1-&gt;4)-beta-D-glucosyl]n-1 + [(1-&gt;4)-beta-D-glucosyl]m + acceptor + H2O.. Its function is as follows. Lytic polysaccharide monooxygenase (LPMO) that depolymerizes crystalline and amorphous polysaccharides via the oxidation of scissile alpha- or beta-(1-4)-glycosidic bonds, yielding C1 oxidation products. Catalysis by LPMOs requires the reduction of the active-site copper from Cu(II) to Cu(I) by a reducing agent and H(2)O(2) or O(2) as a cosubstrate. Shows only weak binding properties to cellulose, and low cellulolytic oxidative activity which questions the involvement of X282 extension-containing AA9 proteins in the degradation of plant cell wall and opens new avenues as to the divergence of function of some AA9 members. This Coprinopsis cinerea (strain Okayama-7 / 130 / ATCC MYA-4618 / FGSC 9003) (Inky cap fungus) protein is AA9 family lytic polysaccharide monooxygenase AA9-X282.